Reading from the N-terminus, the 58-residue chain is Large ribosomal subunit protein uL30 (58 aa).

Belongs to the universal ribosomal protein uL30 family. As to quaternary structure, part of the 50S ribosomal subunit.

In Azotobacter vinelandii (strain DJ / ATCC BAA-1303), this protein is Large ribosomal subunit protein uL30.